We begin with the raw amino-acid sequence, 631 residues long: Probable glutamate--tRNA ligase, cytoplasmic (631 aa).

Residue 139–141 (RFP) coordinates L-glutamate. Positions 144 to 153 (PSGFLHIGHI) match the 'HIGH' region motif. Residue His-149 coordinates ATP. L-glutamate-binding positions include Asp-173, 311–315 (YDFAC), and Arg-329. ATP-binding positions include Glu-332 and 367 to 371 (VLSKR). The 'KMSKS' region motif lies at 367 to 371 (VLSKR).

The protein belongs to the class-I aminoacyl-tRNA synthetase family. Glutamate--tRNA ligase type 2 subfamily.

It is found in the cytoplasm. It carries out the reaction tRNA(Glu) + L-glutamate + ATP = L-glutamyl-tRNA(Glu) + AMP + diphosphate. The polypeptide is Probable glutamate--tRNA ligase, cytoplasmic (Enterocytozoon bieneusi (strain H348) (Microsporidian parasite)).